The chain runs to 155 residues: Ribosome maturation factor RimP (155 aa).

Belongs to the RimP family.

It is found in the cytoplasm. Functionally, required for maturation of 30S ribosomal subunits. The protein is Ribosome maturation factor RimP of Synechococcus sp. (strain WH7803).